Reading from the N-terminus, the 256-residue chain is L-rhamnose 1-dehydrogenase (NAD(P)(+)) (256 aa).

NADP(+) contacts are provided by Gly-12, Ser-14, Arg-15, Ile-17, Ser-37, Asp-66, Ala-67, and Asn-93. Ser-146 serves as the catalytic Proton donor. Beta-L-rhamnose contacts are provided by Ser-146, Ser-148, Gln-156, and Tyr-159. Residues Tyr-159 and Lys-163 each contribute to the NADP(+) site. The active-site Proton acceptor is Tyr-159. Residue Lys-163 is the Lowers pKa of active site Tyr of the active site. Thr-191 lines the beta-L-rhamnose pocket. An NADP(+)-binding site is contributed by Ile-192. Asn-197 is a beta-L-rhamnose binding site.

Belongs to the short-chain dehydrogenases/reductases (SDR) family.

It carries out the reaction L-rhamnofuranose + NAD(+) = L-rhamnono-1,4-lactone + NADH + H(+). It catalyses the reaction L-rhamnofuranose + NADP(+) = L-rhamnono-1,4-lactone + NADPH + H(+). It functions in the pathway carbohydrate degradation; L-rhamnose degradation. Functionally, NAD(P)-dependent dehydrogenase that catalyzes the oxidation of L-rhamnose to L-rhamnono-1,4-lactone. Also shows high activity with L-lyxose and low activity with L-mannose and L-fucose. Can utilize either NAD(+) or NADP(+), with a strong preference for NADP(+). Catalyzes the first step in an alternative pathway for rhamnose utilization that does not involve phosphorylated intermediates. The protein is L-rhamnose 1-dehydrogenase (NAD(P)(+)) of Azotobacter vinelandii (strain DJ / ATCC BAA-1303).